Reading from the N-terminus, the 859-residue chain is Leucine--tRNA ligase (859 aa).

A 'HIGH' region motif is present at residues 42 to 52 (PYPSGRLHMGH). Positions 618–622 (KMSKS) match the 'KMSKS' region motif. K621 contributes to the ATP binding site.

The protein belongs to the class-I aminoacyl-tRNA synthetase family.

It localises to the cytoplasm. The enzyme catalyses tRNA(Leu) + L-leucine + ATP = L-leucyl-tRNA(Leu) + AMP + diphosphate. The polypeptide is Leucine--tRNA ligase (Shewanella sp. (strain MR-7)).